A 73-amino-acid chain; its full sequence is UPF0270 protein SG2298 (73 aa).

The protein belongs to the UPF0270 family.

The sequence is that of UPF0270 protein SG2298 from Sodalis glossinidius (strain morsitans).